Consider the following 67-residue polypeptide: Ceratotoxin-C (67 aa).

The first 23 residues, 1–23, serve as a signal peptide directing secretion; sequence MANIKAVFLICIVAFIAFHCVVA. Residues 24–35 constitute a propeptide that is removed on maturation; it reads EPTAEDSVVVKR.

Homomer of four to six subunits.

It localises to the secreted. Functionally, female-specific peptides with potent activity against Gram-positive and Gram-negative bacteria. They have as well hemolytic activity. This is Ceratotoxin-C (CTXC1) from Ceratitis capitata (Mediterranean fruit fly).